A 420-amino-acid polypeptide reads, in one-letter code: Corticotropin-releasing factor receptor 1 (420 aa).

The signal sequence occupies residues 1-28 (MVPGPRPALLLLLFLLQAFLLWDSPVAA). The Extracellular segment spans residues 29–116 (SIQEQYCESL…CQEILSEEKR (88 aa)). Cystine bridges form between cysteine 35-cysteine 59, cysteine 49-cysteine 92, and cysteine 73-cysteine 107. Residues asparagine 43, asparagine 50, asparagine 83, asparagine 95, and asparagine 103 are each glycosylated (N-linked (GlcNAc...) asparagine). The helical transmembrane segment at 117-147 (SKLHYHIAVIINYLGHCVSLGTLLVAFVLFM) threads the bilayer. The Cytoplasmic segment spans residues 148-154 (RLRSIRC). A helical membrane pass occupies residues 155-179 (LRNIIHWNLITAFILRNATWFVVQL). Residues 180 to 194 (TMNPEVHESNVVWCR) lie on the Extracellular side of the membrane. Cysteine 193 and cysteine 263 are oxidised to a cystine. Residues 195–223 (LVTAAYNYFHVTNFFWMFGEGCYLHTAIV) form a helical membrane-spanning segment. The Cytoplasmic segment spans residues 224–230 (LTYSTDK). Residues 231–258 (LRKWMFICIGWCIPFPIIVAWAIGKLYY) form a helical membrane-spanning segment. Residues 259-274 (DNEKCWFGKRAGVYTD) are Extracellular-facing. The chain crosses the membrane as a helical span at residues 275–300 (YIYQGPMILVLLINFIFLFNIVRILM). Over 301 to 311 (TKLRASTTSET) the chain is Cytoplasmic. A helical membrane pass occupies residues 312–336 (IQYRKAVKATLVLLSLLGITYMLFF). Over 337–343 (VNPGEDE) the chain is Extracellular. A helical transmembrane segment spans residues 344–373 (ISRIVFIYFNSFLESFQGFFVSVFYCFLNS). Residues 374–420 (EVRSAVRKRWHRWQDKHSIRARVARAMSIPTSPTRVSFHSIKQSSAV) are Cytoplasmic-facing.

Belongs to the G-protein coupled receptor 2 family. As to quaternary structure, interacts (via N-terminal extracellular domain) with CRF and UCN.

Its subcellular location is the cell membrane. G-protein coupled receptor for CRH (corticotropin-releasing factor) and UCN (urocortin). Has high affinity for CRH and UCN. Ligand binding causes a conformation change that triggers signaling via guanine nucleotide-binding proteins (G proteins) and down-stream effectors, such as adenylate cyclase. Promotes the activation of adenylate cyclase, leading to increased intracellular cAMP levels. The protein is Corticotropin-releasing factor receptor 1 (CRHR1) of Gallus gallus (Chicken).